The following is a 115-amino-acid chain: ER exit protein (115 aa).

The protein belongs to the STEEP1 family.

Functionally, may stimulate membrane curvature formation and subsequent endoplasmic reticulum exit site (ERES) establishment. This is ER exit protein from Schizosaccharomyces pombe (strain 972 / ATCC 24843) (Fission yeast).